The primary structure comprises 300 residues: N-acetylmuramic acid 6-phosphate etherase (300 aa).

One can recognise an SIS domain in the interval 57 to 220 (ITHAFAHGGR…TSGAMIRSGK (164 aa)). Residue glutamate 85 is the Proton donor of the active site. Glutamate 116 is an active-site residue.

Belongs to the GCKR-like family. MurNAc-6-P etherase subfamily. Homodimer.

The enzyme catalyses N-acetyl-D-muramate 6-phosphate + H2O = N-acetyl-D-glucosamine 6-phosphate + (R)-lactate. The protein operates within amino-sugar metabolism; 1,6-anhydro-N-acetylmuramate degradation. It participates in amino-sugar metabolism; N-acetylmuramate degradation. It functions in the pathway cell wall biogenesis; peptidoglycan recycling. Functionally, specifically catalyzes the cleavage of the D-lactyl ether substituent of MurNAc 6-phosphate, producing GlcNAc 6-phosphate and D-lactate. Together with AnmK, is also required for the utilization of anhydro-N-acetylmuramic acid (anhMurNAc) either imported from the medium or derived from its own cell wall murein, and thus plays a role in cell wall recycling. The sequence is that of N-acetylmuramic acid 6-phosphate etherase from Vibrio vulnificus (strain CMCP6).